The following is a 90-amino-acid chain: U7-theraphotoxin-Hhn1a 3 (90 aa).

The signal sequence occupies residues 1–26; that stretch reads MKTAIFTVVLALAVFAVLSFGWEANG. A propeptide spanning residues 27–50 is cleaved from the precursor; that stretch reads KALSEEFTELIHEKEAASETEARE. 3 disulfides stabilise this stretch: Cys-51–Cys-65, Cys-58–Cys-70, and Cys-64–Cys-81.

This sequence belongs to the neurotoxin 10 (Hwtx-1) family. 13 (Hntx-13) subfamily. In terms of tissue distribution, expressed by the venom gland.

It localises to the secreted. Ion channel inhibitor. The sequence is that of U7-theraphotoxin-Hhn1a 3 from Cyriopagopus hainanus (Chinese bird spider).